Consider the following 259-residue polypeptide: MNLVDLWLSRSLSMCLLLQSFVLMILCFHSASMCPKGCLCSSSGGLNVTCSNANLKEIPRDLPPETVLLYLDSNQITSIPNEIFKDLHQLRVLNLSKNGIEFIDEHAFKGVAETLQTLDLSDNRIQSVHKNAFNNLKARARIANNPWHCDCTLQQVLRSMASNHETAHNVICKTSVLDEHAGRPFLNAANDADLCNLPKKTTDYAMLVTMFGWFTMVISYVVYYVRQNQEDARRHLEYLKSLPSRQKKADEPDDISTVV.

The signal sequence occupies residues 1–33 (MNLVDLWLSRSLSMCLLLQSFVLMILCFHSASM). The 31-residue stretch at 34 to 64 (CPKGCLCSSSGGLNVTCSNANLKEIPRDLPP) folds into the LRRNT domain. N47 is a glycosylation site (N-linked (GlcNAc...) asparagine). LRR repeat units follow at residues 65 to 86 (ETVL…IFKD), 89 to 110 (QLRV…AFKG), and 114 to 135 (TLQT…AFNN). Residue N94 is glycosylated (N-linked (GlcNAc...) asparagine). The region spanning 145 to 197 (NPWHCDCTLQQVLRSMASNHETAHNVICKTSVLDEHAGRPFLNAANDADLCNL) is the LRRCT domain. The chain crosses the membrane as a helical span at residues 205 to 225 (AMLVTMFGWFTMVISYVVYYV).

The protein belongs to the LRRC3 family.

Its subcellular location is the membrane. This chain is Leucine-rich repeat-containing protein 3B (Lrrc3b), found in Mus musculus (Mouse).